The chain runs to 178 residues: Ribosome maturation factor RimM (178 aa).

A PRC barrel domain is found at 100–178; it reads AADEYYWYQL…VMRVEWDADF (79 aa).

It belongs to the RimM family. As to quaternary structure, binds ribosomal protein uS19.

It is found in the cytoplasm. Functionally, an accessory protein needed during the final step in the assembly of 30S ribosomal subunit, possibly for assembly of the head region. Essential for efficient processing of 16S rRNA. May be needed both before and after RbfA during the maturation of 16S rRNA. It has affinity for free ribosomal 30S subunits but not for 70S ribosomes. The polypeptide is Ribosome maturation factor RimM (Pseudomonas putida (strain W619)).